Consider the following 358-residue polypeptide: Ornithine cyclodeaminase (358 aa).

Residues arginine 52 and lysine 76 each contribute to the L-ornithine site. NAD(+)-binding positions include threonine 91, arginine 119, 146 to 147 (AQ), aspartate 168, threonine 208, 231 to 234 (VGGD), lysine 238, and serine 299. Arginine 119 is an L-ornithine binding site. Aspartate 234 contacts L-ornithine. Aspartate 234 (proton donor/acceptor) is an active-site residue. Residue valine 300 participates in L-ornithine binding.

This sequence belongs to the ornithine cyclodeaminase/mu-crystallin family. NAD(+) serves as cofactor.

The enzyme catalyses L-ornithine = L-proline + NH4(+). Its pathway is amino-acid biosynthesis; L-proline biosynthesis; L-proline from L-ornithine: step 1/1. In terms of biological role, catalyzes the conversion of L-ornithine into L-proline with release of ammonia. The polypeptide is Ornithine cyclodeaminase (Brucella suis biovar 1 (strain 1330)).